We begin with the raw amino-acid sequence, 346 residues long: Peripherin-2 (346 aa).

Residues M1–N24 lie on the Cytoplasmic side of the membrane. Residues W25–I43 form a helical membrane-spanning segment. The Lumenal segment spans residues E44–P61. N53 carries N-linked (GlcNAc...) asparagine glycosylation. The chain crosses the membrane as a helical span at residues N62–K80. Residues I81–K99 lie on the Cytoplasmic side of the membrane. A helical transmembrane segment spans residues P100 to R123. The Lumenal portion of the chain corresponds to G124 to S264. N229 carries an N-linked (GlcNAc...) asparagine glycan. The chain crosses the membrane as a helical span at residues M265–L290. Residues E291 to G346 lie on the Cytoplasmic side of the membrane. The interaction with MREG stretch occupies residues P341–G346.

The protein belongs to the PRPH2/ROM1 family. As to quaternary structure, homodimer; disulfide-linked. Forms a homotetramer. Forms a heterotetramer with ROM1. Homotetramer and heterotetramer core complexes go on to form higher order complexes by formation of intermolecular disulfide bonds. Interacts with MREG. Interacts with STX3 isoform 3B. Interacts with SNAP25. As to expression, expressed in the retina (at protein level).

Its subcellular location is the membrane. It localises to the cell projection. The protein localises to the cilium. The protein resides in the photoreceptor outer segment. It is found in the photoreceptor inner segment. Essential for retina photoreceptor outer segment disk morphogenesis, may also play a role with ROM1 in the maintenance of outer segment disk structure. Required for the maintenance of retinal outer nuclear layer thickness. Required for the correct development and organization of the photoreceptor inner segment. This Mus musculus (Mouse) protein is Peripherin-2 (Prph2).